Reading from the N-terminus, the 64-residue chain is Large ribosomal subunit protein uL30 (64 aa).

In terms of assembly, part of the 50S ribosomal subunit. In terms of processing, the protein is methylated on either Ala-2 or Lys-3.

The sequence is that of Large ribosomal subunit protein uL30 from Rhodopseudomonas palustris (strain ATCC BAA-98 / CGA009).